The chain runs to 108 residues: Nucleoid-associated protein Avin_19840 (108 aa).

The protein belongs to the YbaB/EbfC family. As to quaternary structure, homodimer.

Its subcellular location is the cytoplasm. The protein localises to the nucleoid. Functionally, binds to DNA and alters its conformation. May be involved in regulation of gene expression, nucleoid organization and DNA protection. The chain is Nucleoid-associated protein Avin_19840 from Azotobacter vinelandii (strain DJ / ATCC BAA-1303).